The chain runs to 365 residues: Succinyl-diaminopimelate desuccinylase (365 aa).

Residue His-64 participates in Zn(2+) binding. Residue Asp-66 is part of the active site. Residue Asp-95 coordinates Zn(2+). Glu-125 functions as the Proton acceptor in the catalytic mechanism. Residues Glu-126, Glu-154, and His-339 each coordinate Zn(2+).

Belongs to the peptidase M20A family. DapE subfamily. Homodimer. Zn(2+) is required as a cofactor. The cofactor is Co(2+).

It carries out the reaction N-succinyl-(2S,6S)-2,6-diaminopimelate + H2O = (2S,6S)-2,6-diaminopimelate + succinate. The protein operates within amino-acid biosynthesis; L-lysine biosynthesis via DAP pathway; LL-2,6-diaminopimelate from (S)-tetrahydrodipicolinate (succinylase route): step 3/3. Its function is as follows. Catalyzes the hydrolysis of N-succinyl-L,L-diaminopimelic acid (SDAP), forming succinate and LL-2,6-diaminopimelate (DAP), an intermediate involved in the bacterial biosynthesis of lysine and meso-diaminopimelic acid, an essential component of bacterial cell walls. This is Succinyl-diaminopimelate desuccinylase from Campylobacter fetus subsp. fetus (strain 82-40).